A 561-amino-acid polypeptide reads, in one-letter code: MNINVAELLNGNYILLLFVVLALGLCLGKLRLGSIQLGNSIGVLVVSLLLGQQHFSINTDALNLGFMLFIFCVGVEAGPNFFSIFFRDGKNYLMLALVMVGSALVIALGLGKLFGWDIGLTAGMLAGSMTSTPVLVGAGDTLHHSGMESRQLSLALDNLSLGYALTYLIGLVSLIVGARYLPKLQHQDLQTSAQQIARERGLDTDANRKVYLPVIRAYRVGPELVAWTDGKNLRELGIYRQTGCYIERIRRNGILANPDGDAVLQMGDEIALVGYPDAHARLDPSFRNGKEVFDRDLLDMRIVTEEVVVKNHNAVGKRLAQLKLTDHGCFLNRVIRSQIEMPIDDNVVLNKGDVLQVSGDARRVKTIADRIGFISIHSQVTDLLAFCAFFVIGLMIGMITFQFSTFSFGMGNAAGLLFAGIMLGFMRANHPTFGYIPQGALSMVKEFGLMVFMAGVGLSAGSGINNGLGAIGGQMLIAGLIVSLVPVVICFLFGAYVLRMNRALLFGAMMGARTCAPAMEIISDTARSNIPALGYAGTYAIANVLLTLAGTIIVMVWPGLG.

Helical transmembrane passes span 8–28 (LLNG…LCLG), 32–52 (LGSI…LLGQ), 66–86 (FMLF…SIFF), 94–114 (MLAL…GKLF), and 158–178 (NLSL…IVGA). RCK C-terminal domains are found at residues 200-288 (RGLD…SFRN) and 292-373 (VFDR…RIGF). The next 5 helical transmembrane spans lie at 383-403 (LLAF…TFQF), 406-426 (FSFG…LGFM), 451-471 (VFMA…LGAI), 475-495 (MLIA…LFGA), and 540-560 (AIAN…WPGL).

Belongs to the AAE transporter (TC 2.A.81) family. YbjL subfamily.

The protein localises to the cell membrane. This chain is Putative transport protein YbjL, found in Shigella flexneri.